Here is a 164-residue protein sequence, read N- to C-terminus: Cyclic pyranopterin monophosphate synthase (164 aa).

Substrate is bound by residues Leu77 to His79 and Met115 to Glu116. Asp130 is a catalytic residue.

This sequence belongs to the MoaC family. In terms of assembly, homohexamer; trimer of dimers.

The catalysed reaction is (8S)-3',8-cyclo-7,8-dihydroguanosine 5'-triphosphate = cyclic pyranopterin phosphate + diphosphate. Its pathway is cofactor biosynthesis; molybdopterin biosynthesis. Catalyzes the conversion of (8S)-3',8-cyclo-7,8-dihydroguanosine 5'-triphosphate to cyclic pyranopterin monophosphate (cPMP). The polypeptide is Cyclic pyranopterin monophosphate synthase (Rhizobium meliloti (strain 1021) (Ensifer meliloti)).